We begin with the raw amino-acid sequence, 151 residues long: 3-hydroxyacyl-[acyl-carrier-protein] dehydratase FabZ (151 aa).

The active site involves His57.

Belongs to the thioester dehydratase family. FabZ subfamily.

The protein resides in the cytoplasm. The catalysed reaction is a (3R)-hydroxyacyl-[ACP] = a (2E)-enoyl-[ACP] + H2O. Functionally, involved in unsaturated fatty acids biosynthesis. Catalyzes the dehydration of short chain beta-hydroxyacyl-ACPs and long chain saturated and unsaturated beta-hydroxyacyl-ACPs. The chain is 3-hydroxyacyl-[acyl-carrier-protein] dehydratase FabZ from Synechococcus sp. (strain CC9605).